The sequence spans 369 residues: Omega-amidase, chloroplastic (369 aa).

Residues 1–63 (MKSAISSSLF…SALRSISSSM (63 aa)) constitute a chloroplast transit peptide. A64 is subject to N-acetylalanine. Positions 88–337 (FNIGLCQLSV…EAIIIAEIDY (250 aa)) constitute a CN hydrolase domain. E127 (proton acceptor) is an active-site residue. The active-site Proton donor is K201. C242 (nucleophile) is an active-site residue.

Belongs to the nitrilase superfamily. NIT1/NIT2 family.

The protein localises to the plastid. The protein resides in the chloroplast. The enzyme catalyses a monoamide of a dicarboxylate + H2O = a dicarboxylate + NH4(+). Omega-amidase involved in the metabolism of asparagine. Probably also closely coupled with glutamine transamination in the methionine salvage cycle. Can use alpha-ketosuccinamate and alpha-hydroxysuccinamate as substrates, producing respectively oxaloacetate and malate, or alpha-ketoglutaramate, producing alpha-ketoglutarate. This Arabidopsis thaliana (Mouse-ear cress) protein is Omega-amidase, chloroplastic.